Reading from the N-terminus, the 279-residue chain is Methyltransferase prhM (279 aa).

S-adenosyl-L-methionine-binding positions include 124-125 and 152-153; these read DI and DV.

It belongs to the class I-like SAM-binding methyltransferase superfamily.

It functions in the pathway secondary metabolite biosynthesis; terpenoid biosynthesis. Its function is as follows. Methyltransferase; part of the gene cluster that mediates the biosynthesis of paraherquonin, a meroterpenoid with a unique, highly congested hexacyclic molecular architecture. The first step of the pathway is the synthesis of 3,5-dimethylorsellinic acid (DMOA) by the polyketide synthase prhL. Synthesis of DMOA is followed by farnesylation by the prenyltransferase prhE, methylesterification by the methyl-transferase prhM, epoxidation of the prenyl chain by the flavin-dependent monooxygenase prhF, and cyclization of the farnesyl moiety by the terpene cyclase prhH, to yield the tetracyclic intermediate, protoaustinoid A. The short chain dehydrogenase prhI then oxidizes the C-3 alcohol group of the terpene cyclase product to transform protoaustinoid A into protoaustinoid B. The FAD-binding monooxygenase prhJ catalyzes the oxidation of protoaustinoid B into preaustinoid A which is further oxidized into preaustinoid A1 by FAD-binding monooxygenase phrK. Finally, prhA leads to berkeleydione via the berkeleyone B intermediate. PrhA is a multifunctional dioxygenase that first desaturates at C5-C6 to form berkeleyone B, followed by rearrangement of the A/B-ring to form the cycloheptadiene moiety in berkeleydione. Berkeleydione serves as the key intermediate for the biosynthesis of paraherquonin as well as many other meroterpenoids. The cytochrome P450 monooxygenases prhB, prhD, and prhN, as well as the isomerase prhC, are probably involved in the late stage of paraherquonin biosynthesis, after the production of berkeleydione. Especially prhC might be a multifunctional enzyme that catalyzes the D-ring expansion via intramolecular methoxy rearrangement, as well as the hydrolysis of the expanded D-ring. In Penicillium brasilianum, this protein is Methyltransferase prhM.